We begin with the raw amino-acid sequence, 306 residues long: Pyridoxal 5'-phosphate synthase subunit PdxS (306 aa).

Aspartate 36 is a binding site for D-ribose 5-phosphate. Catalysis depends on lysine 93, which acts as the Schiff-base intermediate with D-ribose 5-phosphate. Glycine 165 contributes to the D-ribose 5-phosphate binding site. Residue arginine 177 coordinates D-glyceraldehyde 3-phosphate. Residues glycine 226 and 247–248 (GS) each bind D-ribose 5-phosphate.

Belongs to the PdxS/SNZ family. In terms of assembly, in the presence of PdxT, forms a dodecamer of heterodimers.

The catalysed reaction is aldehydo-D-ribose 5-phosphate + D-glyceraldehyde 3-phosphate + L-glutamine = pyridoxal 5'-phosphate + L-glutamate + phosphate + 3 H2O + H(+). It participates in cofactor biosynthesis; pyridoxal 5'-phosphate biosynthesis. In terms of biological role, catalyzes the formation of pyridoxal 5'-phosphate from ribose 5-phosphate (RBP), glyceraldehyde 3-phosphate (G3P) and ammonia. The ammonia is provided by the PdxT subunit. Can also use ribulose 5-phosphate and dihydroxyacetone phosphate as substrates, resulting from enzyme-catalyzed isomerization of RBP and G3P, respectively. The polypeptide is Pyridoxal 5'-phosphate synthase subunit PdxS (Salinispora tropica (strain ATCC BAA-916 / DSM 44818 / JCM 13857 / NBRC 105044 / CNB-440)).